A 461-amino-acid chain; its full sequence is Ribonuclease inhibitor (461 aa).

Residue Ser2 is modified to N-acetylserine. Positions 2-11 (SLDIQSLDIQ) are 2 X 5 AA tandem repeats of S-L-D-I-Q. LRR repeat units lie at residues 20-48 (WAELLPLLQQCQVVRLDDCGLTEARCKDI), 49-76 (SSALRVNPALAELNLRSNELGDVGVHCV), 77-105 (LQGLQTPSCKIQKLSLQNCCLTGAGCGVL), 106-133 (SSTLRTLPTLQELHLSDNLLGDAGLQLL), 134-162 (CEGLLDPQCRLEKLQLEYCSLSAASCEPL), 163-190 (ASVLRAKPDFKELTVSNNDINEAGVRVL), 191-219 (CQGLKDSPCQLEALKLESCGVTSDNCRDL), 220-247 (CGIVASKASLRELALGSNKLGDVGMAEL), 248-276 (CPGLLHPSSRLRTLWIWECGITAKGCGDL), 277-304 (CRVLRAKESLKELSLAGNELGDEGARLL), 305-333 (CETLLEPGCQLESLWVKSCSFTAACCSHF), 334-361 (SSVLAQNRFLLELQISNNRLEDAGVREL), 362-390 (CQGLGQPGSVLRVLWLADCDVSDSSCSSL), 391-418 (AATLLANHSLRELDLSNNCLGDAGILQL), and 419-447 (VESVRQPGCLLEQLVLYDIYWSEEMEDRL). Thr82 is modified (phosphothreonine). Ser91 bears the Phosphoserine mark.

As to quaternary structure, forms high-affinity heterodimers with RNASE1, ANG and RNASE2. The N-terminus is blocked. Post-translationally, at least 30 of the 32 cysteine residues are in the reduced form.

Its subcellular location is the cytoplasm. It localises to the nucleus. In terms of biological role, ribonuclease inhibitor which inhibits RNASE1, RNASE2 and angiogenin (ANG). May play a role in redox homeostasis. Required to inhibit the cytotoxic tRNA ribonuclease activity of ANG in the cytoplasm in absence of stress. Relocates to the nucleus in response to stress, relieving inhibition of ANG in the cytoplasm, and inhibiting the angiogenic activity of ANG in the nucleus. This chain is Ribonuclease inhibitor, found in Homo sapiens (Human).